We begin with the raw amino-acid sequence, 309 residues long: Protein FdhE (309 aa).

The protein belongs to the FdhE family.

It localises to the cytoplasm. Necessary for formate dehydrogenase activity. This is Protein FdhE from Salmonella paratyphi A (strain ATCC 9150 / SARB42).